We begin with the raw amino-acid sequence, 318 residues long: C1GALT1-specific chaperone 1 (318 aa).

Topologically, residues 1-6 (MLSESS) are cytoplasmic. A helical; Signal-anchor for type II membrane protein transmembrane segment spans residues 7–26 (SFLKGVMLGSIFCALITMLG). Topologically, residues 27-318 (HIRIGHGNRM…FLPPNGSDND (292 aa)) are lumenal.

The protein belongs to the glycosyltransferase 31 family. Beta3-Gal-T subfamily. As to quaternary structure, associates with core 1 beta-3-galactosyltransferase (C1GALT1), probably not with the soluble active form. In terms of tissue distribution, ubiquitously expressed. Abundantly expressed in salivary gland, stomach, small intestine, kidney, and testis and at intermediate levels in whole brain, cerebellum, spinal cord, thymus, spleen, trachea, lung, pancreas, ovary, and uterus.

It localises to the membrane. Probable chaperone required for the generation of 1 O-glycan Gal-beta1-3GalNAc-alpha1-Ser/Thr (T antigen), which is a precursor for many extended O-glycans in glycoproteins. Probably acts as a specific molecular chaperone assisting the folding/stability of core 1 beta-3-galactosyltransferase (C1GALT1). In Homo sapiens (Human), this protein is C1GALT1-specific chaperone 1 (C1GALT1C1).